Reading from the N-terminus, the 953-residue chain is Zinc finger protein 507 (953 aa).

Residue serine 95 is modified to Phosphoserine. C2H2-type zinc fingers lie at residues tyrosine 125–histidine 147, leucine 155–histidine 185, and tyrosine 248–histidine 270. Serine 427 carries the post-translational modification Phosphoserine. The interval lysine 470 to serine 489 is disordered. C2H2-type zinc fingers lie at residues tyrosine 641 to histidine 663, tyrosine 669 to histidine 691, tyrosine 697 to histidine 720, tyrosine 758 to histidine 780, and tyrosine 786 to histidine 808. The segment at glycine 831 to tyrosine 891 is disordered. The segment covering threonine 854–tyrosine 891 has biased composition (polar residues). The C2H2-type 9 zinc finger occupies phenylalanine 911–histidine 933.

This sequence belongs to the krueppel C2H2-type zinc-finger protein family.

Its subcellular location is the nucleus. Functionally, may be involved in transcriptional regulation. In Pongo abelii (Sumatran orangutan), this protein is Zinc finger protein 507 (ZNF507).